The primary structure comprises 330 residues: Homeobox protein Hox-C13 (330 aa).

Residues 30-47 (GGGGGGGGGTGGAGGGCS) show a composition bias toward gly residues. A disordered region spans residues 30–50 (GGGGGGGGGTGGAGGGCSGAS). Residues 260–319 (GRKKRVPYTKVQLKELEKEYAASKFITKEKRRRISATTNLSERQVTIWFQNRRVKEKKVV) constitute a DNA-binding region (homeobox).

It belongs to the Abd-B homeobox family.

Its subcellular location is the nucleus. Its function is as follows. Transcription factor which plays a role in hair follicle differentiation. Regulates FOXQ1 expression and that of other hair-specific genes. This Homo sapiens (Human) protein is Homeobox protein Hox-C13 (HOXC13).